Here is a 249-residue protein sequence, read N- to C-terminus: Acidic leucine-rich nuclear phosphoprotein 32 family member A (249 aa).

Position 15 is a phosphothreonine (Thr15). Position 17 is a phosphoserine (Ser17). LRR repeat units follow at residues 18-38 (DVKE…EGLT), 43-64 (ELEF…PKLN), 65-87 (KLKK…AEKC), and 89-110 (NLTH…EPLK). The region spanning 123 to 161 (CEVTNLNDYRENVFKLLPQLTYLDGYDRDDKEAPDSDAE) is the LRRCT domain. Over residues 147–156 (GYDRDDKEAP) the composition is skewed to basic and acidic residues. A disordered region spans residues 147–249 (GYDRDDKEAP…EPEDEGEDDD (103 aa)). A necessary for tumor-suppressive function region spans residues 150-174 (RDDKEAPDSDAEGYVEGLDDEEEDE). A compositionally biased stretch (acidic residues) spans 157-230 (DSDAEGYVEG…DEEDEEELGE (74 aa)). Ser158 and Ser204 each carry phosphoserine; by CK2. The interval 165-249 (EGLDDEEEDE…EPEDEGEDDD (85 aa)) is interaction with E4F1.

Belongs to the ANP32 family. As to quaternary structure, component of the SET complex, composed of at least ANP32A, APEX1, HMGB2, NME1, SET and TREX1. Directly interacts with SET. Interacts with ATXN1/SCA1. Interacts with MAP1B. Interacts with ELAVL1. Part of the INHAT (inhibitor of histone acetyltransferases) complex. Interacts with E4F1. In terms of assembly, (Microbial infection) Interacts (via C-terminus) with influenza virus A protein PB2; this interaction promotes viral replication. (Microbial infection) Interacts (via C-terminus) with influenza virus B protein PB2; this interaction promotes viral replication. As to quaternary structure, (Microbial infection) Interacts (via C-terminus) with influenza virus C protein PB2; this interaction promotes viral replication by bridging viral replicase dimers together. Phosphorylated on serine residues, at least in part by casein kinase 2/CK2. In terms of processing, the N-terminus is blocked. Post-translationally, some glutamate residues are glycylated by TTLL8. This modification occurs exclusively on glutamate residues and results in a glycine chain on the gamma-carboxyl group. In terms of tissue distribution, expressed in all tissues tested. Highly expressed in kidney and skeletal muscle, moderate levels of expression in brain, placenta and pancreas, and weakly expressed in lung. Found in all regions of the brain examined (amygdala, caudate nucleus, corpus callosum, hippocampus and thalamus), with highest levels in amygdala.

Its subcellular location is the nucleus. The protein resides in the cytoplasm. The protein localises to the endoplasmic reticulum. Its function is as follows. Multifunctional protein that is involved in the regulation of many processes including tumor suppression, apoptosis, cell cycle progression or transcription. Promotes apoptosis by favouring the activation of caspase-9/CASP9 and allowing apoptosome formation. In addition, plays a role in the modulation of histone acetylation and transcription as part of the INHAT (inhibitor of histone acetyltransferases) complex. Inhibits the histone-acetyltranferase activity of EP300/CREBBP (CREB-binding protein) and EP300/CREBBP-associated factor by histone masking. Preferentially binds to unmodified histone H3 and sterically inhibiting its acetylation and phosphorylation leading to cell growth inhibition. Participates in other biochemical processes such as regulation of mRNA nuclear-to-cytoplasmic translocation and stability by its association with ELAVL1 (Hu-antigen R). Plays a role in E4F1-mediated transcriptional repression as well as inhibition of protein phosphatase 2A. In terms of biological role, (Microbial infection) Plays an essential role in influenza A, B and C viral genome replication. Mechanistically, mediates the assembly of the viral replicase asymmetric dimers composed of PB1, PB2 and PA via its N-terminal region. Also plays an essential role in foamy virus mRNA export from the nucleus. This Homo sapiens (Human) protein is Acidic leucine-rich nuclear phosphoprotein 32 family member A (ANP32A).